The chain runs to 140 residues: Methylglyoxal synthase (140 aa).

In terms of domain architecture, MGS-like spans 1–140; sequence MRSKPRIALI…DQAAADDAAP (140 aa). Substrate contacts are provided by residues His-12, Lys-16, 38 to 41, and 58 to 59; these read TGTT and SG. Residue Asp-64 is the Proton donor/acceptor of the active site. His-91 is a substrate binding site.

Belongs to the methylglyoxal synthase family.

It catalyses the reaction dihydroxyacetone phosphate = methylglyoxal + phosphate. Catalyzes the formation of methylglyoxal from dihydroxyacetone phosphate. This chain is Methylglyoxal synthase, found in Cupriavidus metallidurans (strain ATCC 43123 / DSM 2839 / NBRC 102507 / CH34) (Ralstonia metallidurans).